Reading from the N-terminus, the 412-residue chain is uncharacterized protein (412 aa).

Belongs to the PQQ oxidoreductase GdhB family. The cofactor is pyrroloquinoline quinone.

This is an uncharacterized protein from Synechocystis sp. (strain ATCC 27184 / PCC 6803 / Kazusa).